We begin with the raw amino-acid sequence, 426 residues long: Gamma-glutamyl phosphate reductase (426 aa).

It belongs to the gamma-glutamyl phosphate reductase family.

Its subcellular location is the cytoplasm. The enzyme catalyses L-glutamate 5-semialdehyde + phosphate + NADP(+) = L-glutamyl 5-phosphate + NADPH + H(+). It participates in amino-acid biosynthesis; L-proline biosynthesis; L-glutamate 5-semialdehyde from L-glutamate: step 2/2. In terms of biological role, catalyzes the NADPH-dependent reduction of L-glutamate 5-phosphate into L-glutamate 5-semialdehyde and phosphate. The product spontaneously undergoes cyclization to form 1-pyrroline-5-carboxylate. In Cupriavidus taiwanensis (strain DSM 17343 / BCRC 17206 / CCUG 44338 / CIP 107171 / LMG 19424 / R1) (Ralstonia taiwanensis (strain LMG 19424)), this protein is Gamma-glutamyl phosphate reductase.